Reading from the N-terminus, the 154-residue chain is Myoglobin (154 aa).

Positions 2-148 (ELSDQEWKHV…FRNDMASKYK (147 aa)) constitute a Globin domain. His-65 contributes to the nitrite binding site. His-65 lines the O2 pocket. His-94 serves as a coordination point for heme b.

It belongs to the globin family. Monomeric.

The protein resides in the cytoplasm. It is found in the sarcoplasm. The catalysed reaction is Fe(III)-heme b-[protein] + nitric oxide + H2O = Fe(II)-heme b-[protein] + nitrite + 2 H(+). The enzyme catalyses H2O2 + AH2 = A + 2 H2O. In terms of biological role, monomeric heme protein which primary function is to store oxygen and facilitate its diffusion within muscle tissues. Reversibly binds oxygen through a pentacoordinated heme iron and enables its timely and efficient release as needed during periods of heightened demand. Depending on the oxidative conditions of tissues and cells, and in addition to its ability to bind oxygen, it also has a nitrite reductase activity whereby it regulates the production of bioactive nitric oxide. Under stress conditions, like hypoxia and anoxia, it also protects cells against reactive oxygen species thanks to its pseudoperoxidase activity. The protein is Myoglobin (MB) of Alligator mississippiensis (American alligator).